Consider the following 615-residue polypeptide: Afadin- and alpha-actinin-binding protein (615 aa).

Coiled-coil stretches lie at residues 126 to 227 (KLGS…IAMD) and 266 to 293 (RQKQ…SLLS). A phosphoserine mark is found at Ser-290, Ser-293, Ser-313, and Ser-319. Residues 293–316 (SPQKKKPRERAEDGTGTVAISDIE) are disordered. Positions 375–461 (ISRQDHEQET…RSFTEAAIRL (87 aa)) form a coiled coil. Phosphoserine is present on residues Ser-537, Ser-541, and Ser-543. Residues 567–615 (PEESKPSEVARESTDQKWSVQSRPSSREGCYSGCSSAFRSAHGDRDDLP) form a disordered region. A compositionally biased stretch (basic and acidic residues) spans 568–581 (EESKPSEVARESTD).

This sequence belongs to the ADIP family. In terms of assembly, interacts with SSX2 and SSX3. Does not interact with SSX1 and SSX4. Interacts with afadin and alpha-actinin. Interacts with VAV2. Interacts with PCM1. Interacts with WRAP73. Widely expressed.

The protein resides in the cell junction. The protein localises to the adherens junction. Its subcellular location is the nucleus. It localises to the cytoplasm. It is found in the cytoskeleton. The protein resides in the microtubule organizing center. The protein localises to the centrosome. Its subcellular location is the centriolar satellite. It localises to the cilium basal body. Functionally, belongs to an adhesion system, which plays a role in the organization of homotypic, interneuronal and heterotypic cell-cell adherens junctions (AJs). May connect the nectin-afadin and E-cadherin-catenin system through alpha-actinin and may be involved in organization of the actin cytoskeleton at AJs through afadin and alpha-actinin. Acts as a centrosome maturation factor, probably by maintaining the integrity of the pericentriolar material and proper microtubule nucleation at mitotic spindle poles. The function seems to implicate at least in part WRAP73; the SSX2IP:WRAP73 complex is proposed to act as regulator of spindle anchoring at the mitotic centrosome. Involved in cell movement: localizes at the leading edge of moving cells in response to PDGF and is required for the formation of the leading edge and the promotion of cell movement, possibly via activation of Rac signaling. Involved in ciliogenesis. It is required for targeted recruitment of the BBSome, CEP290, RAB8, and SSTR3 to the cilia. The polypeptide is Afadin- and alpha-actinin-binding protein (Ssx2ip) (Mus musculus (Mouse)).